Here is a 29-residue protein sequence, read N- to C-terminus: Omega-conotoxin MVIIC (29 aa).

The propeptide occupies 1–2; it reads TR. 3 disulfides stabilise this stretch: Cys-3-Cys-18, Cys-10-Cys-22, and Cys-17-Cys-28. Cys-28 bears the Cysteine amide mark.

The protein belongs to the conotoxin O1 superfamily. Post-translationally, not hydroxylated; hydroxylation, on a synthetic hydroxylated MVIIC, has a significant impact on the oxidative folding but not on the biological activity. In terms of tissue distribution, expressed by the venom duct.

The protein resides in the secreted. Functionally, omega-conotoxins act at presynaptic membranes, they bind and block voltage-gated calcium channels (Cav). This toxin preferentially blocks P/Q-type calcium channels (Cav2.1/CACNA1A) (IC(50)=0.60 nM). Also shows an inhibition on Cav2.2/CACNA1A channels (IC(50)=7.0 nM). The polypeptide is Omega-conotoxin MVIIC (Conus magus (Magical cone)).